The sequence spans 344 residues: Putative transport protein sll0060 (344 aa).

A run of 8 helical transmembrane segments spans residues 14–34 (LWIG…LQIL), 41–61 (LRIF…VRWL), 72–92 (AVAL…LLVI), 155–175 (LINL…IFIM), 215–235 (IGQA…LSIF), 237–257 (VPLA…PFGG), 262–282 (VLIS…VLAI), and 310–330 (ILLS…LVAI).

Belongs to the autoinducer-2 exporter (AI-2E) (TC 2.A.86) family.

It is found in the cell membrane. This is Putative transport protein sll0060 from Synechocystis sp. (strain ATCC 27184 / PCC 6803 / Kazusa).